A 143-amino-acid chain; its full sequence is Putative pre-16S rRNA nuclease (143 aa).

It belongs to the YqgF nuclease family.

It is found in the cytoplasm. Functionally, could be a nuclease involved in processing of the 5'-end of pre-16S rRNA. This Agathobacter rectalis (strain ATCC 33656 / DSM 3377 / JCM 17463 / KCTC 5835 / VPI 0990) (Eubacterium rectale) protein is Putative pre-16S rRNA nuclease.